Consider the following 571-residue polypeptide: MSAILSADDLNDFISPGVACIKPVETLPAAKPSADNELEISFNTDAPLPSDLPPAQISLTDCLACSGCVTSAEAVLVSLQSHAEVLSQLDSAPGLRLYKNATGTGIKVEGVEQGGKIYVASVSPQSRASIAATFGVTEREAGYMIEHLLSGPKGIKNRAVYRNAFQWVVDTNITREACLVLGAEEVIASMTDTGSKKPVLTSSCPGWVCYAEKTHPHVLPHLSRMKSPQALMGTLIKTTLSRKLGISPDRIWHVAVMPCFDKKLEASREELTDAVWEGTGTRGVRDVDSVITSKELLMLADSRGIEFSKLPRTPIPTSSRIPFPDTKIDSFLFPSNRKGSGNGNRDAGTSGGNLHYALHYFASQHKGSSIQTIKGRNVDVVDYTVVAENGEILLKAARYYGFRNIQNLVRRLKPAKPSRMPGGKPIGSARRPNGKASGPDYSYVEVMACPGGCTNGGGQIKVDDPINTSRLEGDAKAGPQEQKMWLAQVDEAYFSGEDNVESSSVDDRNDLVEGISPSYIKDTLSHWAATTGLDLERLVYTTYREVVSDVGKNVGDAERVIEIAGKIGGGW.

[4Fe-4S] cluster is bound by residues cysteine 20, cysteine 62, cysteine 65, cysteine 68, cysteine 204, and cysteine 259. Positions 415–437 (AKPSRMPGGKPIGSARRPNGKAS) are disordered. Residues cysteine 449 and cysteine 453 each coordinate [4Fe-4S] cluster.

The protein belongs to the NARF family.

Component of the cytosolic Fe/S protein assembly machinery. Required for maturation of extramitochondrial Fe/S proteins. May play a role in the transfer of pre-assembled Fe/S clusters to target apoproteins. The protein is Cytosolic Fe-S cluster assembly factor NAR1 (NAR1) of Sclerotinia sclerotiorum (strain ATCC 18683 / 1980 / Ss-1) (White mold).